The primary structure comprises 247 residues: Small ribosomal subunit protein uS3 (247 aa).

The region spanning 51-119 (VAKRDKRPAG…ELHLNIVEIR (69 aa)) is the KH type-2 domain. Over residues 224-233 (PSAHDRRQQE) the composition is skewed to basic and acidic residues. A disordered region spans residues 224-247 (PSAHDRRQQELQESGGASRPRRDR).

Belongs to the universal ribosomal protein uS3 family. In terms of assembly, part of the 30S ribosomal subunit. Forms a tight complex with proteins S10 and S14.

Its function is as follows. Binds the lower part of the 30S subunit head. Binds mRNA in the 70S ribosome, positioning it for translation. The protein is Small ribosomal subunit protein uS3 of Jannaschia sp. (strain CCS1).